Reading from the N-terminus, the 724-residue chain is 1,4-alpha-glucan branching enzyme GlgB 1 (724 aa).

Asp-403 functions as the Nucleophile in the catalytic mechanism. The active-site Proton donor is the Glu-456.

The protein belongs to the glycosyl hydrolase 13 family. GlgB subfamily. In terms of assembly, monomer.

The enzyme catalyses Transfers a segment of a (1-&gt;4)-alpha-D-glucan chain to a primary hydroxy group in a similar glucan chain.. The protein operates within glycan biosynthesis; glycogen biosynthesis. Functionally, catalyzes the formation of the alpha-1,6-glucosidic linkages in glycogen by scission of a 1,4-alpha-linked oligosaccharide from growing alpha-1,4-glucan chains and the subsequent attachment of the oligosaccharide to the alpha-1,6 position. The chain is 1,4-alpha-glucan branching enzyme GlgB 1 (glgB1) from Xanthomonas axonopodis pv. citri (strain 306).